The following is a 377-amino-acid chain: NADH dehydrogenase [ubiquinone] 1 alpha subcomplex subunit 9, mitochondrial (377 aa).

A mitochondrion-targeting transit peptide spans 1-35; sequence MAAAAQSRVVRVLSMSRSAITAIATSVCHGPPCRQ. At lysine 175 the chain carries N6-succinyllysine. N6-acetyllysine occurs at positions 189 and 370.

This sequence belongs to the complex I NDUFA9 subunit family. In terms of assembly, complex I is composed of 45 different subunits. This a component of the hydrophobic protein fraction. Interacts with BLOC1S1. Interacts with SLC2A4. Interacts with CLOCK. Interacts with RAB5IF. The cofactor is FAD. In terms of processing, acetylated on lysine residues. BLOC1S1 is required for acetylation. Acetylated by CLOCK in a circadian manner.

Its subcellular location is the mitochondrion matrix. Its function is as follows. Accessory subunit of the mitochondrial membrane respiratory chain NADH dehydrogenase (Complex I), that is believed not to be involved in catalysis. Required for proper complex I assembly. Complex I functions in the transfer of electrons from NADH to the respiratory chain. The immediate electron acceptor for the enzyme is believed to be ubiquinone. In Homo sapiens (Human), this protein is NADH dehydrogenase [ubiquinone] 1 alpha subcomplex subunit 9, mitochondrial (NDUFA9).